A 681-amino-acid chain; its full sequence is Pentatricopeptide repeat-containing protein At2g22410, mitochondrial (681 aa).

A mitochondrion-targeting transit peptide spans 1–32; sequence MNISKAKLLLLPPPLTPKLNRSLYSHSQRRTR. 13 PPR repeats span residues 117–151, 155–189, 190–220, 221–255, 256–290, 291–321, 322–356, 357–387, 388–422, 423–453, 454–488, 489–519, and 525–555; these read NIFSWNVTIRGFSESENPKESFLLYKQMLRHGCCE, DHFTYPVLFKVCADLRLSSLGHMILGHVLKLRLEL, VSHVHNASIHMFASCGDMENARKVFDESPVR, DLVSWNCLINGYKKIGEAEKAIYVYKLMESEGVKP, DDVTMIGLVSSCSMLGDLNRGKEFYEYVKENGLRM, TIPLVNALMDMFSKCGDIHEARRIFDNLEKR, TIVSWTTMISGYARCGLLDVSRKLFDDMEEKDVVL, WNAMIGGSVQAKRGQDALALFQEMQTSNTKP, DEITMIHCLSACSQLGALDVGIWIHRYIEKYSLSL, NVALGTSLVDMYAKCGNISEALSVFHGIQTR, NSLTYTAIIGGLALHGDASTAISYFNEMIDAGIAP, DEITFIGLLSACCHGGMIQTGRDYFSQMKSR, and QLKHYSIMVDLLGRAGLLEEADRLMESMPME. Residues 560–635 form a type E motif region; the sequence is VWGALLFGCR…IPGCSSIEVN (76 aa). The segment at 636-666 is type E(+) motif; that stretch reads GIVCEFIVRDKSRPESEKIYDRLHCLGRHMR.

This sequence belongs to the PPR family. PCMP-E subfamily.

Its subcellular location is the mitochondrion. The chain is Pentatricopeptide repeat-containing protein At2g22410, mitochondrial (PCMP-E28) from Arabidopsis thaliana (Mouse-ear cress).